Here is a 433-residue protein sequence, read N- to C-terminus: Beta-agarase AgaA (433 aa).

An N-terminal signal peptide occupies residues 1–20 (MRKITSILLTCVMGCTATYA). Residues 21–295 (ADWDGVPVPA…WVRFYKPVPI (275 aa)) form the GH16 domain. Residue E147 is the Nucleophile of the active site. Residue E152 is the Proton donor of the active site. Positions 300–431 (TTVELGNFHN…QWNGDEIRFV (132 aa)) constitute a CBM6 domain.

This sequence belongs to the glycosyl hydrolase 16 family. As to quaternary structure, monomer.

The protein resides in the periplasm. The enzyme catalyses Hydrolysis of (1-&gt;4)-beta-D-galactosidic linkages in agarose, giving the tetramer as the predominant product.. Its activity is regulated as follows. Activity is abolished by Hg(2+), Cu(2+), Pb(2+) and Zn(2+) ions, but is not affected by NaCl up to at least 1.0 M, Mg(2+), K(+) and Ca(2+). Not affected by iodoacetamide, p-chloromercuribenzoate, dithiothreitol, 2-mercaptoethanol, EDTA and sodium dodecyl sulfate. Inhibited by N-bromosuccinimide. Functionally, endo-type beta-agarase, which produces neoagarotetraose (NA4) as the main final product, with a small amount of neoagarohexaose (NA6) and neoagarobiose (NA2). This chain is Beta-agarase AgaA, found in Microbulbifer thermotolerans.